The following is a 558-amino-acid chain: Poly(A) polymerase PAPalpha (558 aa).

A compositionally biased stretch (polar residues) spans M1–P17. Positions M1–K20 are disordered. Residues F86–S88, D99–D101, D153, K214, Y223, and G232–V233 contribute to the ATP site. Mg(2+) contacts are provided by D99, D101, and D153. The segment at V516–S558 is disordered. A compositionally biased stretch (basic and acidic residues) spans I535–N545. The segment covering S547 to S558 has biased composition (low complexity).

Belongs to the poly(A) polymerase family. The cofactor is Mg(2+). Mn(2+) serves as cofactor.

The protein localises to the nucleus. It catalyses the reaction RNA(n) + ATP = RNA(n)-3'-adenine ribonucleotide + diphosphate. Its function is as follows. Polymerase that creates the 3'-poly(A) tail of mRNA's. May acquire specificity through interaction with a cleavage and polyadenylation factor. The sequence is that of Poly(A) polymerase PAPalpha (PAPALPHA) from Candida albicans (strain SC5314 / ATCC MYA-2876) (Yeast).